We begin with the raw amino-acid sequence, 541 residues long: Reticulophagy regulator 2 (541 aa).

3 consecutive transmembrane segments (helical) span residues 75-91 (LHSL…FWLL), 99-115 (FFLL…LDLW), and 199-219 (VPGI…PLVV). The tract at residues 249–282 (LHHKHDKRKRQGKNAPPAGDEPLAETESESEAEL) is disordered. Positions 250–260 (HHKHDKRKRQG) are enriched in basic residues. The segment covering 270-280 (PLAETESESEA) has biased composition (acidic residues). Thr274 carries the post-translational modification Phosphothreonine. 4 positions are modified to phosphoserine: Ser276, Ser278, Ser286, and Ser306. Thr329 carries the post-translational modification Phosphothreonine. Disordered regions lie at residues 331–389 (VSED…ADKE), 403–440 (THFN…APSS), and 459–481 (PSVL…EEEA). Phosphoserine occurs at positions 332, 339, and 342. The span at 459–475 (PSVLPSLPQDSPQALTA) shows a compositional bias: low complexity. An LIR motif motif is present at residues 485-490 (EDFELL). The interval 496–541 (EQLNAELGLGPEMPPKPPDVLPPPPLGPDSHSLVQSDQEAHAVVEP) is disordered. Positions 507-522 (EMPPKPPDVLPPPPLG) are enriched in pro residues.

It belongs to the RETREG family. In terms of assembly, interacts with ATG8 family modifier proteins MAP1LC3A, MAP1LC3B, GABARAP, GABARAPL1 and GABARAPL2. Interacts with CANX.

Its subcellular location is the endoplasmic reticulum membrane. Endoplasmic reticulum (ER)-anchored autophagy regulator which exists in an inactive state under basal conditions but is activated following cellular stress. When activated, induces ER fragmentation and mediates ER delivery into lysosomes through sequestration into autophagosomes via interaction with ATG8 family proteins. Required for collagen quality control in a LIR motif-independent manner. This Rattus norvegicus (Rat) protein is Reticulophagy regulator 2 (Retreg2).